We begin with the raw amino-acid sequence, 311 residues long: Malate dehydrogenase (311 aa).

NAD(+) contacts are provided by residues 7 to 13 (GAAGGIG) and Asp-34. The substrate site is built by Arg-81 and Arg-87. NAD(+) contacts are provided by residues Asn-94 and 117-119 (ITN). Residues Asn-119 and Arg-153 each contribute to the substrate site. His-177 serves as the catalytic Proton acceptor. Position 227 (Met-227) interacts with NAD(+).

The protein belongs to the LDH/MDH superfamily. MDH type 1 family. In terms of assembly, homodimer.

It carries out the reaction (S)-malate + NAD(+) = oxaloacetate + NADH + H(+). Catalyzes the reversible oxidation of malate to oxaloacetate. The polypeptide is Malate dehydrogenase (Shewanella pealeana (strain ATCC 700345 / ANG-SQ1)).